The sequence spans 942 residues: Inter-alpha-trypsin inhibitor heavy chain H5 (942 aa).

The N-terminal stretch at 1 to 16 is a signal peptide; sequence MLLLLGLCLGLSLCVG. Positions 35–161 constitute a VIT domain; that stretch reads VPRQVRLLQR…KAAFFLSYEE (127 aa). Residues Asn97 and Asn127 are each glycosylated (N-linked (GlcNAc...) asparagine). Disordered stretches follow at residues 116–136 and 208–227; these read KKSGDRVKEKRNKTTEENGEK and SRQRGSGRGEDDSGPPPSTV. 3 N-linked (GlcNAc...) asparagine glycosylation sites follow: Asn231, Asn421, and Asn508. The VWFA domain maps to 295–478; it reads NVVFVLDSSA…SQLIGFYDEI (184 aa). The interval 550–571 is disordered; it reads QKAGKDVTGSPRPGGDGEGDTN. N-linked (GlcNAc...) asparagine glycosylation is found at Asn776, Asn795, and Asn862.

It belongs to the ITIH family. In terms of tissue distribution, abundantly expressed in placenta. Less abundant expression in mammary gland and ovary. Expression is barely detectable levels in all other tissues tested.

It localises to the secreted. Its function is as follows. May act as a tumor suppressor. This chain is Inter-alpha-trypsin inhibitor heavy chain H5 (ITIH5), found in Homo sapiens (Human).